The following is a 142-amino-acid chain: Small ribosomal subunit protein uS12 (142 aa).

Residues 1–30 (MGKTRGMGAARKLKNHRRRQRWADKSYKKS) are disordered. Positions 11–20 (RKLKNHRRRQ) are enriched in basic residues. Residues 21–30 (RWADKSYKKS) show a composition bias toward basic and acidic residues. Position 61 is a hydroxyproline (Pro61).

Belongs to the universal ribosomal protein uS12 family.

In Fragaria ananassa (Strawberry), this protein is Small ribosomal subunit protein uS12 (RPS23).